The sequence spans 69 residues: Conotoxin Gla-TxXI (69 aa).

The first 25 residues, 1–25 (MVRVTSVGCFLLVIVSLNLVVLTNA), serve as a signal peptide directing secretion. 4 cysteine pairs are disulfide-bonded: Cys26/Cys40, Cys33/Cys45, Cys39/Cys49, and Cys44/Cys53. Glu29 bears the 4-carboxyglutamate mark. Pro56 carries the proline amide modification. Positions 60–69 (AKLLEFFRQR) are excised as a propeptide.

In terms of processing, contains 4 disulfide bonds. As to expression, expressed by the venom duct.

The protein resides in the secreted. The chain is Conotoxin Gla-TxXI from Conus textile (Cloth-of-gold cone).